A 291-amino-acid chain; its full sequence is Ribosomal RNA small subunit methyltransferase A (291 aa).

6 residues coordinate S-adenosyl-L-methionine: His-37, Leu-39, Gly-64, Glu-85, Asp-110, and Asn-131.

Belongs to the class I-like SAM-binding methyltransferase superfamily. rRNA adenine N(6)-methyltransferase family. RsmA subfamily.

It is found in the cytoplasm. It carries out the reaction adenosine(1518)/adenosine(1519) in 16S rRNA + 4 S-adenosyl-L-methionine = N(6)-dimethyladenosine(1518)/N(6)-dimethyladenosine(1519) in 16S rRNA + 4 S-adenosyl-L-homocysteine + 4 H(+). Functionally, specifically dimethylates two adjacent adenosines (A1518 and A1519) in the loop of a conserved hairpin near the 3'-end of 16S rRNA in the 30S particle. May play a critical role in biogenesis of 30S subunits. The protein is Ribosomal RNA small subunit methyltransferase A of Dehalococcoides mccartyi (strain ATCC BAA-2100 / JCM 16839 / KCTC 5957 / BAV1).